The chain runs to 892 residues: MTASHSETPSTKPDASTFISDHLQVDRSKLSQMYLHYVETKDKYPHAVLLYRVGDFFECYFQDAVKLAQELELVLTSKQAGEQGRVAMSGVPHHAWERYATLLVEKGYAVVICDQVEDASEAAGRLVRREVTRILTPGTLLEEGMLKSSRNNYLAAVVIAANHWGLAYADISTGEFLTTQGSDLEHLTQELMRLQPSEVLVPTNAPDLGSLLRPGETSPHLPECLPPSFCYSLRSQVPFSQGEARPRLLQKFKVRSLEGLGCDRFPLAVRAAGGLLEYLEDTQKENPVPLQRLRTYTVTDYLIVDSQTRRNLEITQTVRDGTFHGSLLWSLDRTSTAMGGRALRRWLLQPLLDIKGIRARQDTIQELMENTPLRQDLRQLLRQIYDLERLTGRAGSGTANARDLVALADSLSRLPELSHLVTESHSPFLKALQKVPSVLEELAQKLHAHLVESPPILIKEGGLIRPSVNPLLDERKATVEADQQWIANLEVDERAKTGISTLKVGFNKTFGYYISISRTKADQVPANYIRKQTLTNEERYITPDLKEREARILSARDDLNQLEYEIFTALREEVAQEAEVIRNLSRAVAAADVLCGLAELAVHQGYCRPEMLSGREINIVDGRHPVVEQSLPAGFFVPNSTQLGQESLVSSHLSLADNQEQITNTSLREAAPTTTLSTSDQGQMTNDNPDLIILTGPNASGKSCYLRQVGLIQLMAQIGSFVPARLAKLGICDRIFTRVGAVDDLATGQSTFMVEMNETANILNHATSRSLVLLDEIGRGTATFDGLSIAWAVAEYIAVDIRARTIFATHYHELNELASIVPNVANYQVTVKELPDQIIFLHQVQPGGADKSYGIEAGRLAGLPAVVIQRAKQVMGQIEKHSKIAMGLQNLD.

The segment at 663–684 (TNTSLREAAPTTTLSTSDQGQM) is disordered. 696-703 (GPNASGKS) contributes to the ATP binding site.

Belongs to the DNA mismatch repair MutS family.

Its function is as follows. This protein is involved in the repair of mismatches in DNA. It is possible that it carries out the mismatch recognition step. This protein has a weak ATPase activity. The sequence is that of DNA mismatch repair protein MutS from Nostoc punctiforme (strain ATCC 29133 / PCC 73102).